Consider the following 152-residue polypeptide: Probable flagellum biosynthesis repressor protein FlbT (152 aa).

It belongs to the FlbT family.

In terms of biological role, has a post-transcriptional repressor function in flagellum biogenesis. Associates with the 5'-UTR of fljK mRNA and promotes its degradation. In Brucella canis (strain ATCC 23365 / NCTC 10854 / RM-666), this protein is Probable flagellum biosynthesis repressor protein FlbT.